Reading from the N-terminus, the 420-residue chain is Xyloglucan O-acetyltransferase 4 (420 aa).

At 1–30 the chain is on the cytoplasmic side; sequence MTMHEKMKLPSCSCSAFKCGKKDRWLNMER. Residues 31–51 form a helical; Signal-anchor for type II membrane protein membrane-spanning segment; that stretch reads PIPFLLIGLTTILSVFILYTL. The Lumenal portion of the chain corresponds to 52-420; that stretch reads NPLKFVIEHN…LLLAVLRRLD (369 aa). 4 disulfide bridges follow: C78-C128, C99-C164, C108-C400, and C323-C396. N96 is a glycosylation site (N-linked (GlcNAc...) asparagine). The GDS motif motif lies at 151-153; the sequence is GDS. Residue S153 is the Nucleophile of the active site. Residues N192, N212, N270, and N324 are each glycosylated (N-linked (GlcNAc...) asparagine). D395 acts as the Proton donor in catalysis. The DXXH motif motif lies at 395–398; that stretch reads DCVH. The Proton acceptor role is filled by H398.

This sequence belongs to the PC-esterase family. TBL subfamily.

The protein resides in the golgi apparatus membrane. In terms of biological role, xyloglucan acetyltransferase that catalyzes the acetylation of fucosylated Gal residues on xyloglucan side chains. Predominantly catalyze 6-O-monoacetylation of Gal residues in the Fuc-Gal-Xyl trisaccharide side chains of xyloglucan oligomers. This Populus trichocarpa (Western balsam poplar) protein is Xyloglucan O-acetyltransferase 4.